A 366-amino-acid chain; its full sequence is Beta sliding clamp (366 aa).

Belongs to the beta sliding clamp family. In terms of assembly, forms a ring-shaped head-to-tail homodimer around DNA which binds and tethers DNA polymerases and other proteins to the DNA. The DNA replisome complex has a single clamp-loading complex (3 tau and 1 each of delta, delta', psi and chi subunits) which binds 3 Pol III cores (1 core on the leading strand and 2 on the lagging strand) each with a beta sliding clamp dimer. Additional proteins in the replisome are other copies of gamma, psi and chi, Ssb, DNA helicase and RNA primase.

The protein localises to the cytoplasm. In terms of biological role, confers DNA tethering and processivity to DNA polymerases and other proteins. Acts as a clamp, forming a ring around DNA (a reaction catalyzed by the clamp-loading complex) which diffuses in an ATP-independent manner freely and bidirectionally along dsDNA. Initially characterized for its ability to contact the catalytic subunit of DNA polymerase III (Pol III), a complex, multichain enzyme responsible for most of the replicative synthesis in bacteria; Pol III exhibits 3'-5' exonuclease proofreading activity. The beta chain is required for initiation of replication as well as for processivity of DNA replication. This chain is Beta sliding clamp (dnaN), found in Buchnera aphidicola subsp. Rhopalosiphum padi.